Here is a 121-residue protein sequence, read N- to C-terminus: UPF0344 protein BCA_1194 (121 aa).

Helical transmembrane passes span 6 to 26, 38 to 58, 65 to 85, and 92 to 112; these read ITAWALGLILFFVAYSLYSAG, LMYIIIIVTGFMLYMGIMKTA, WYGLKMVAGILVIGGMEMVLV, and ATGAVWGLFIVALVAVFYLGL.

Belongs to the UPF0344 family.

It localises to the cell membrane. In Bacillus cereus (strain 03BB102), this protein is UPF0344 protein BCA_1194.